Here is a 209-residue protein sequence, read N- to C-terminus: NADH-ubiquinone oxidoreductase subunit 9 (209 aa).

It belongs to the complex I 30 kDa subunit family. Complex I is composed of about 30 different subunits.

The protein localises to the mitochondrion inner membrane. The enzyme catalyses a ubiquinone + NADH + 5 H(+)(in) = a ubiquinol + NAD(+) + 4 H(+)(out). Its function is as follows. Core subunit of the mitochondrial membrane respiratory chain NADH dehydrogenase (Complex I) that is believed to belong to the minimal assembly required for catalysis. Complex I functions in the transfer of electrons from NADH to the respiratory chain. The immediate electron acceptor for the enzyme is believed to be ubiquinone. The polypeptide is NADH-ubiquinone oxidoreductase subunit 9 (NAD9) (Paramecium primaurelia).